The primary structure comprises 491 residues: MDIEEWEQRHAEAFYNAKEALPYLDGMFVAYNSNIDAIRHLTEEDLSKLVGFFDESDIQDRVAAYPREIAEPLDFVARLLISMREGKAAEVPAYTADIHEWLKEHLGFDYARMGGQAGIISNLLGRLGLKKVVAYVPWLSEEQAEYFTATGNILHPKVENGKVLLKPPGEAFKPGIGSKVNWILEYSKDMNVTCAGNTFKVPRDNRLIISSRPKWLRLDMDKQIYEQLDTLLPVDGAMLSGYQMIKEEYEDGSTYKDYVENSVKVIEKLKSLNPELRIHVELTSIQNRLIRKAILTEIVARHVHSLGLDTVEVANALNVLGHEELSYSVIRKGENGIMSLYQGAVQLMKDLDLERVHVHSLGFYICILAKGHPLTLKEHRDSLLFSSVLAAAQALNGNIENLAEAEAGLEVPVSSIGLEDLENFQLYCTGRKLCTPDEFEYGYVYGSEHDAILIPSKVVERPKATVGIGDTISAGAFVAMLAKIKQKHSGK.

Residues 4–486 enclose the ADPK domain; that stretch reads EEWEQRHAEA…FVAMLAKIKQ (483 aa). 3 residues coordinate Mg(2+): Glu-281, Glu-312, and Asp-470. Catalysis depends on Asp-470, which acts as the Proton acceptor.

Belongs to the carbohydrate kinase PfkC family. Requires Mg(2+) as cofactor.

The protein resides in the cytoplasm. The enzyme catalyses beta-D-fructose 6-phosphate + ADP = beta-D-fructose 1,6-bisphosphate + AMP + H(+). The protein operates within carbohydrate degradation; glycolysis. Its function is as follows. Catalyzes the phosphorylation of fructose 6-phosphate to fructose 1,6-bisphosphate using ADP as the phosphate donor. This chain is ADP-specific phosphofructokinase, found in Methanosarcina acetivorans (strain ATCC 35395 / DSM 2834 / JCM 12185 / C2A).